A 276-amino-acid chain; its full sequence is Syntaxin-12 (276 aa).

Ser2 is modified (N-acetylserine). Residues 2–248 (SYGPLDMYRN…RAAYYQKKSR (247 aa)) are Cytoplasmic-facing. Positions 33 to 131 (IQRISQATAQ…RRVSEKEKES (99 aa)) form a coiled coil. 4 positions are modified to phosphoserine: Ser139, Ser142, Ser218, and Ser225. In terms of domain architecture, t-SNARE coiled-coil homology spans 178–240 (LELIKERETA…ERATEQLQRA (63 aa)). The helical; Anchor for type IV membrane protein transmembrane segment at 249–269 (KKMCILVLVLSVIIVILGLII) threads the bilayer. At 270–276 (WLVYKTK) the chain is on the vesicular side.

This sequence belongs to the syntaxin family. In terms of assembly, associates with the BLOC-1 complex. Interacts with BLOC1S6. Interacts with NAPA and SNAP23. Identified in a complex containing STX6, STX12, VAMP4 and VTI1A. Interacts with GRIPAP1. Forms a complex with GRIP1, GRIA2 and NSG1; controls the intracellular fate of AMPAR and the endosomal sorting of the GRIA2 subunit toward recycling and membrane targeting. Interacts with NSG1. Interacts with TPC1. Interacts (via N-terminus) with VPS13B.

The protein localises to the endosome membrane. It is found in the golgi apparatus membrane. Its subcellular location is the endomembrane system. It localises to the early endosome membrane. The protein resides in the recycling endosome membrane. Functionally, SNARE promoting fusion of transport vesicles with target membranes. Together with SNARE STX6, promotes movement of vesicles from endosomes to the cell membrane, and may therefore function in the endocytic recycling pathway. Through complex formation with GRIP1, GRIA2 and NSG1 controls the intracellular fate of AMPAR and the endosomal sorting of the GRIA2 subunit toward recycling and membrane targeting. This is Syntaxin-12 (STX12) from Pongo abelii (Sumatran orangutan).